The following is a 67-amino-acid chain: PLPEIILNKVREGEALGPVMSQYTGIDEIGRKEGAIGVFTKGVLTRSGVYHQAVVLALSPFHNAIYR.

The protein belongs to the YjjX NTPase family. Homodimer. Mg(2+) serves as cofactor. Requires Mn(2+) as cofactor.

The enzyme catalyses XTP + H2O = XDP + phosphate + H(+). It catalyses the reaction ITP + H2O = IDP + phosphate + H(+). In terms of biological role, phosphatase that hydrolyzes non-canonical purine nucleotides such as XTP and ITP to their respective diphosphate derivatives. Probably excludes non-canonical purines from DNA/RNA precursor pool, thus preventing their incorporation into DNA/RNA and avoiding chromosomal lesions. This Enterobacter cloacae protein is Inosine/xanthosine triphosphatase.